We begin with the raw amino-acid sequence, 84 residues long: Small ribosomal subunit protein uS17 (84 aa).

This sequence belongs to the universal ribosomal protein uS17 family. Part of the 30S ribosomal subunit.

In terms of biological role, one of the primary rRNA binding proteins, it binds specifically to the 5'-end of 16S ribosomal RNA. This Sodalis glossinidius (strain morsitans) protein is Small ribosomal subunit protein uS17.